The sequence spans 545 residues: Glucose-6-phosphate isomerase (545 aa).

Glutamate 351 functions as the Proton donor in the catalytic mechanism. Catalysis depends on residues histidine 382 and lysine 510.

Belongs to the GPI family.

Its subcellular location is the cytoplasm. It carries out the reaction alpha-D-glucose 6-phosphate = beta-D-fructose 6-phosphate. It participates in carbohydrate biosynthesis; gluconeogenesis. Its pathway is carbohydrate degradation; glycolysis; D-glyceraldehyde 3-phosphate and glycerone phosphate from D-glucose: step 2/4. Its function is as follows. Catalyzes the reversible isomerization of glucose-6-phosphate to fructose-6-phosphate. This Shewanella sp. (strain ANA-3) protein is Glucose-6-phosphate isomerase.